Here is a 645-residue protein sequence, read N- to C-terminus: Aspartate--tRNA ligase, mitochondrial (645 aa).

The transit peptide at 1–47 (MYFPSWLSQLYRGLSRPIRRTTQPIWGSLYRSLLQSSQRRIPEFSSF) directs the protein to the mitochondrion. Position 219 is a phosphothreonine (threonine 219). Residue serine 242 is modified to Phosphoserine. Residues 244 to 247 (QQFK) form an aspartate region. An L-aspartate-binding site is contributed by arginine 266. 266-268 (RDE) is a binding site for ATP. Lysine 382 carries the N6-acetyllysine modification. Glutamate 535 serves as a coordination point for ATP. Arginine 542 is an L-aspartate binding site. Position 584 to 587 (584 to 587 (GLDR)) interacts with ATP.

It belongs to the class-II aminoacyl-tRNA synthetase family. Type 1 subfamily. As to quaternary structure, homodimer.

The protein resides in the mitochondrion matrix. It localises to the mitochondrion membrane. It catalyses the reaction tRNA(Asp) + L-aspartate + ATP = L-aspartyl-tRNA(Asp) + AMP + diphosphate. In terms of biological role, catalyzes the attachment of aspartate to tRNA(Asp) in a two-step reaction: aspartate is first activated by ATP to form Asp-AMP and then transferred to the acceptor end of tRNA(Asp). The polypeptide is Aspartate--tRNA ligase, mitochondrial (DARS2) (Homo sapiens (Human)).